A 131-amino-acid chain; its full sequence is UPF0102 protein YraN (131 aa).

Residues 1–19 are compositionally biased toward polar residues; it reads MATVPTRSGSPRQLTTKQT. Residues 1 to 20 form a disordered region; that stretch reads MATVPTRSGSPRQLTTKQTG.

This sequence belongs to the UPF0102 family.

The sequence is that of UPF0102 protein YraN from Escherichia coli O17:K52:H18 (strain UMN026 / ExPEC).